Here is a 184-residue protein sequence, read N- to C-terminus: Large ribosomal subunit protein uL6 (184 aa).

It belongs to the universal ribosomal protein uL6 family. As to quaternary structure, part of the 50S ribosomal subunit.

Functionally, this protein binds to the 23S rRNA, and is important in its secondary structure. It is located near the subunit interface in the base of the L7/L12 stalk, and near the tRNA binding site of the peptidyltransferase center. This chain is Large ribosomal subunit protein uL6, found in Aster yellows witches'-broom phytoplasma (strain AYWB).